Here is a 3110-residue protein sequence, read N- to C-terminus: Huntingtin (3110 aa).

Residues 1 to 58 form a disordered region; the sequence is MKAFESLKSFQQQQQQQQPPPQPPPPPPPPPQPPQPPPQGQPPPPPPLPGPAEEPLHR. Position 2 is an N6-acetyllysine (lysine 2). The segment covering 18–52 has biased composition (pro residues); the sequence is QPPPQPPPPPPPPPQPPQPPPQGQPPPPPPLPGPA. N6-acetyllysine occurs at positions 146 and 204. HEAT repeat units lie at residues 174 to 211 and 216 to 253; these read PYLVNLLPCLTRTSKRPEESVQETLAAAVPKIMASFGN and NEIKVLLKAFIANLKSSSPTVRRTAAGSAVSICQHSRR. Lysine 313 is subject to N6-acetyllysine. A phosphoserine mark is found at serine 387, serine 389, and serine 402. Lysine 412 bears the N6-acetyllysine mark. The tract at residues 462 to 473 is interaction with ZDHHC17; sequence GHDIITEQPRSQ. Positions 487–549 are disordered; it reads DLTSAATDGD…PDSAVTPSDS (63 aa). A compositionally biased stretch (polar residues) spans 521 to 549; it reads DGTQASSPISDSSQTTTEGPDSAVTPSDS. The N-myristoyl glycine moiety is linked to residue glycine 522. 2 positions are modified to phosphoserine: serine 611 and serine 614. HEAT repeat units follow at residues 773-810 and 873-911; these read FSLVDCIPLLQKTLKDESSVTCKLACTAVRHCVLSLCS and KLQERVLNNVVIYLLGDEDPRVRHVAATTLTRLVPKLFY. Residues 1137-1195 form a disordered region; the sequence is KAALPSLTNPPSLSPIRRKGKEKEPGEQTSTPMSPKKGGEASTASRQSDTSGPVTASKS. Residues 1140–1151 are compositionally biased toward low complexity; the sequence is LPSLTNPPSLSP. Phosphoserine; by CDK5 occurs at positions 1150 and 1170. Polar residues predominate over residues 1178 to 1195; it reads STASRQSDTSGPVTASKS. One copy of the HEAT 5 repeat lies at 1395 to 1432; that stretch reads LFEPLVIKALKQYTTTTSVQLQKQVLDLLAQLVQLRVN. Serine 1845 is subject to Phosphoserine. A Nuclear export signal motif is present at residues 2363-2372; sequence IVVSLARLPL. Positions 2601–2628 are disordered; the sequence is EEEWDEEEEEEADAPAPTSPPVSPVNSR. Residues 2602–2613 are compositionally biased toward acidic residues; the sequence is EEWDEEEEEEAD.

It belongs to the huntingtin family. As to quaternary structure, interacts with PFN1. Interacts through its N-terminus with PRPF40A. Interacts with PQBP1. Interacts with SETD2. Interacts with SH3GLB1. Interacts with SYVN. Interacts with TPR; the interaction is inhibited by forms of Huntingtin with expanded polyglutamine stretch. Interacts with ZDHHC13 (via ANK repeats). Interacts with ZDHHC17 (via ANK repeats). Interacts with F8A1/F8A2/F8A3. Found in a complex with F8A1/F8A2/F8A3, HTT and RAB5A; mediates the recruitment of HTT by RAB5A. Phosphorylation at Ser-1150 and Ser-1170 by CDK5 in response to DNA damage in nuclei of neurons protects neurons against polyglutamine expansion as well as DNA damage mediated toxicity. Post-translationally, cleaved by caspases downstream of the polyglutamine stretch. In terms of processing, myristoylated at Gly-522, following proteolytic cleavage at Asp-521. In terms of tissue distribution, expressed to a high degree in all the regions of the brain of adults and in meiotic cells of the testis. In addition, very low levels are detected in various non-neuronal tissues (heart, muscle, liver, lung and kidney).

It is found in the cytoplasm. The protein resides in the nucleus. The protein localises to the cytoplasmic vesicle. It localises to the autophagosome. Functionally, may play a role in microtubule-mediated transport or vesicle function. Promotes the formation of autophagic vesicles. The chain is Huntingtin (Htt) from Rattus norvegicus (Rat).